The sequence spans 197 residues: Putative NADH dehydrogenase/NAD(P)H nitroreductase Plav_3612 (197 aa).

It belongs to the nitroreductase family. HadB/RutE subfamily. Requires FMN as cofactor.

The chain is Putative NADH dehydrogenase/NAD(P)H nitroreductase Plav_3612 from Parvibaculum lavamentivorans (strain DS-1 / DSM 13023 / NCIMB 13966).